The following is a 140-amino-acid chain: Lysozyme E (140 aa).

The N-terminal stretch at 1–18 (MKAFIVLVALAMAAPALG) is a signal peptide. A C-type lysozyme domain is found at 19–140 (RTLDRCSLAR…GWLPSIDGCF (122 aa)). Intrachain disulfides connect Cys24–Cys139, Cys45–Cys129, Cys80–Cys96, and Cys92–Cys110. Residues Glu50 and Asp68 contribute to the active site.

Belongs to the glycosyl hydrolase 22 family. In terms of tissue distribution, found in the midgut.

The enzyme catalyses Hydrolysis of (1-&gt;4)-beta-linkages between N-acetylmuramic acid and N-acetyl-D-glucosamine residues in a peptidoglycan and between N-acetyl-D-glucosamine residues in chitodextrins.. Unlikely to play an active role in the humoral immune defense. May have a function in the digestion of bacteria in the food. In Drosophila melanogaster (Fruit fly), this protein is Lysozyme E (LysE).